The following is a 476-amino-acid chain: Probable G-protein coupled receptor No9 (476 aa).

The Extracellular segment spans residues 1 to 36 (MEGPPLSPAPADNVTLNVSCGRPATLFDWADHRLIS). N-linked (GlcNAc...) asparagine glycosylation is found at Asn13 and Asn17. Residues 37-60 (LLALAFLNLMVVAGNLLVVMAVFV) form a helical membrane-spanning segment. At 61-69 (HSKLRTVTN) the chain is on the cytoplasmic side. Residues 70 to 93 (LFIVSLACADLLVGMLVLPFSATL) form a helical membrane-spanning segment. The Extracellular segment spans residues 94–103 (EVLDVWLYGD). Residues 104–127 (VWCSVWLAVDVWMCTSSILNLCAI) traverse the membrane as a helical segment. A disulfide bridge connects residues Cys106 and Cys192. Topologically, residues 128 to 152 (SLDRYLAVSQPISYPSLMSTRRAKQ) are cytoplasmic. Residues 153–172 (LIAAVWVLSFVICFPPLVGW) form a helical membrane-spanning segment. Topologically, residues 173 to 200 (NDRPGTLIGSRGSSACRLTCELTNERGY) are extracellular. A helical membrane pass occupies residues 201 to 221 (VIYSALGSFFLPSTVMLFFYG). Over 222–375 (RIYRTAVSTT…FRMETKAAKT (154 aa)) the chain is Cytoplasmic. Positions 266–278 (AAAGGARAHGQVR) are enriched in low complexity. 2 disordered regions span residues 266–293 (AAAGGARAHGQVRLTLSEPGARRQNKPS) and 317–351 (DSRPGRRVPQPQRPAKKLSSASQSSEDDSRPPRFI). The chain crosses the membrane as a helical span at residues 376 to 396 (VGIIVGLFILCWLPFFVCYLV). Topologically, residues 397-406 (RGFCADCVPP) are extracellular. Residues 407-430 (LLFSVFFWLGYCNSAVNPCVYALC) form a helical membrane-spanning segment. The Cytoplasmic segment spans residues 431-476 (SRDFRFAFSSILCKCVCRRGAMERRFRRTLLVGNRSQTEEDCEVAD).

It belongs to the G-protein coupled receptor 1 family.

It localises to the cell membrane. Its function is as follows. Orphan G-protein coupled receptor. The sequence is that of Probable G-protein coupled receptor No9 from Amphibalanus amphitrite (Striped barnacle).